Here is a 68-residue protein sequence, read N- to C-terminus: DNA-directed RNA polymerase subunit omega (68 aa).

Belongs to the RNA polymerase subunit omega family. As to quaternary structure, the RNAP catalytic core consists of 2 alpha, 1 beta, 1 beta' and 1 omega subunit. When a sigma factor is associated with the core the holoenzyme is formed, which can initiate transcription.

It carries out the reaction RNA(n) + a ribonucleoside 5'-triphosphate = RNA(n+1) + diphosphate. Functionally, promotes RNA polymerase assembly. Latches the N- and C-terminal regions of the beta' subunit thereby facilitating its interaction with the beta and alpha subunits. The sequence is that of DNA-directed RNA polymerase subunit omega from Nitrosospira multiformis (strain ATCC 25196 / NCIMB 11849 / C 71).